A 300-amino-acid polypeptide reads, in one-letter code: N-carbamoylputrescine amidase (300 aa).

One can recognise a CN hydrolase domain in the interval Val-8–Leu-266. Glu-47 acts as the Proton acceptor in catalysis. The Proton donor role is filled by Lys-120. Cys-157 functions as the Nucleophile in the catalytic mechanism.

Belongs to the carbon-nitrogen hydrolase superfamily. Homooctamer.

The catalysed reaction is N-carbamoylputrescine + H2O + 2 H(+) = putrescine + NH4(+) + CO2. It functions in the pathway amine and polyamine biosynthesis; putrescine biosynthesis via agmatine pathway; putrescine from N-carbamoylputrescine (amidase route): step 1/1. In terms of biological role, involved in polyamine biosynthesis. The chain is N-carbamoylputrescine amidase (CPA) from Solanum tuberosum (Potato).